Consider the following 756-residue polypeptide: MSTESKCPFNHAAGGGTTNRDWWPKQLNLKILHQHSSLSDPMGESFDYAKEFKSLDFEAVKQDLRDVMTRSQDWWPADFGHYGPLFVRMAWHSAGTYRTGDGHGGAGAGQQRFAPLNSWPDNVSLDKARRLIWPVKQKYGRKISWADLIVLTGNVALESMGFKTFGFSGGRPDVWEPEEDVYWGSETTWLGGEERYGAQKKMQQPGDGTLVAEPENHANEESRTASGERNLENPLAAVQMGLIYVNPEGPEGVPDPVASAKDIRETFGRMAMNDEETVALIAGGHAFGKTHGAGPADNVGPEPEAAGLEEQGLGWRNKFGSGKGGDTITSGLEVTWTSTPTKWSNEYLENLFGFEWELTKSPAGAHQWTPKNGAGAGKIPDAHDPSKRHAPSMLTSDLALRFDPAYEQISRRFLNNPEQLADAFARAWFKLTHRDMGPLARYLGPETPAEELLWQDPIPNVDHALVDDQDVAALKGKILASGLSVPQLVSTAWAAASTFRGSDKRGGANGGRLRLAPQKDWAVNQPAQLAGVLKTLEGIQSEFNAAQSSGKQVSIADLIVLAGSAGVEQAAKNAGHHVTVPFTPGRADASQEQTDVESFSFLEPIADGFRNYQKGHYKVSAESLLVDKAQLLTLTAPEMAVLLGGLRVLNINVGQSKHGVFTDKPETLSNDFFKNLLDMGVEWRATSGANDTFEARDRKTGAVKWTGTRVDLVFGSHAQLRAISEVYGSSDANEKFVKDFVAAWTKVMNLDRFDLA.

The segment at residues 91–244 (WHSAGTYRTG…LAAVQMGLIY (154 aa)) is a cross-link (tryptophyl-tyrosyl-methioninium (Trp-Tyr) (with M-270)). The Proton acceptor role is filled by histidine 92. Positions 198–230 (AQKKMQQPGDGTLVAEPENHANEESRTASGERN) are disordered. Residues 214–223 (PENHANEESR) show a composition bias toward basic and acidic residues. The tryptophyl-tyrosyl-methioninium (Tyr-Met) (with W-91) cross-link spans 244 to 270 (YVNPEGPEGVPDPVASAKDIRETFGRM). Histidine 285 contributes to the heme b binding site. Residues 371–390 (KNGAGAGKIPDAHDPSKRHA) form a disordered region.

Belongs to the peroxidase family. Peroxidase/catalase subfamily. As to quaternary structure, homodimer or homotetramer. Heme b serves as cofactor. Formation of the three residue Trp-Tyr-Met cross-link is important for the catalase, but not the peroxidase activity of the enzyme.

It catalyses the reaction H2O2 + AH2 = A + 2 H2O. The catalysed reaction is 2 H2O2 = O2 + 2 H2O. Bifunctional enzyme with both catalase and broad-spectrum peroxidase activity. The polypeptide is Catalase-peroxidase (Pseudomonas savastanoi pv. phaseolicola (strain 1448A / Race 6) (Pseudomonas syringae pv. phaseolicola (strain 1448A / Race 6))).